The chain runs to 248 residues: 3-deoxy-manno-octulosonate cytidylyltransferase (248 aa).

Belongs to the KdsB family.

It localises to the cytoplasm. The enzyme catalyses 3-deoxy-alpha-D-manno-oct-2-ulosonate + CTP = CMP-3-deoxy-beta-D-manno-octulosonate + diphosphate. The protein operates within nucleotide-sugar biosynthesis; CMP-3-deoxy-D-manno-octulosonate biosynthesis; CMP-3-deoxy-D-manno-octulosonate from 3-deoxy-D-manno-octulosonate and CTP: step 1/1. Its pathway is bacterial outer membrane biogenesis; lipopolysaccharide biosynthesis. Its function is as follows. Activates KDO (a required 8-carbon sugar) for incorporation into bacterial lipopolysaccharide in Gram-negative bacteria. The sequence is that of 3-deoxy-manno-octulosonate cytidylyltransferase from Christiangramia forsetii (strain DSM 17595 / CGMCC 1.15422 / KT0803) (Gramella forsetii).